A 551-amino-acid chain; its full sequence is L-lactate permease (551 aa).

12 helical membrane-spanning segments follow: residues 13–33 (NIWLSSLIASLPILFFFFALI), 37–57 (LKGYVAASWTVVIALAVALLF), 69–89 (VVYGFFYGLWPIAWIIIAAVF), 131–151 (GAAGFGAPVAITAALLVGLGF), 159–179 (LCLIVNTAPVAFGAMGIPILV), 194–214 (MVGRQLPFLTIIVLFWIMAIM), 245–265 (IGPELPDIISSLVSLVCLTLF), 306–326 (FLFLTATVTLWSIPPFKALFA), 366–386 (FDWFSATGTAILFAALLSIVW), 405–425 (LALPIYSIGMVLAFAFISNYS), 438–458 (TGSAFTFFSPFLGWLGVFLTG), and 530–550 (IFTCMVGVITTLQAYVLTWMI).

The protein belongs to the lactate permease family.

It is found in the cell inner membrane. The enzyme catalyses (S)-lactate(in) + H(+)(in) = (S)-lactate(out) + H(+)(out). The catalysed reaction is (R)-lactate(in) + H(+)(in) = (R)-lactate(out) + H(+)(out). It carries out the reaction glycolate(in) + H(+)(in) = glycolate(out) + H(+)(out). Functionally, uptake of L-lactate across the membrane. Can also transport D-lactate and glycolate. Seems to be driven by a proton motive force. The chain is L-lactate permease (lldP) from Salmonella typhi.